A 574-amino-acid polypeptide reads, in one-letter code: Cholinesterase (574 aa).

A glycan (N-linked (GlcNAc...) asparagine) is linked at asparagine 57. An intrachain disulfide couples cysteine 65 to cysteine 92. Asparagine 106 carries an N-linked (GlcNAc...) asparagine glycan. Position 116–117 (116–117) interacts with substrate; the sequence is GG. Serine 198 acts as the Acyl-ester intermediate in catalysis. At serine 198 the chain carries Phosphoserine. 2 N-linked (GlcNAc...) asparagine glycosylation sites follow: asparagine 241 and asparagine 256. Residues cysteine 252 and cysteine 263 are joined by a disulfide bond. Catalysis depends on glutamate 325, which acts as the Charge relay system. Asparagine 341 carries N-linked (GlcNAc...) asparagine glycosylation. A disulfide bridge connects residues cysteine 400 and cysteine 519. Residue histidine 438 is the Charge relay system of the active site. N-linked (GlcNAc...) asparagine glycans are attached at residues asparagine 455, asparagine 481, and asparagine 486.

It belongs to the type-B carboxylesterase/lipase family. As to quaternary structure, homotetramer; disulfide-linked. Dimer of dimers. As to expression, detected in blood plasma (at protein level). Present in most cells except erythrocytes.

It is found in the secreted. It catalyses the reaction an acylcholine + H2O = a carboxylate + choline + H(+). In terms of biological role, esterase with broad substrate specificity. Contributes to the inactivation of the neurotransmitter acetylcholine. Can degrade neurotoxic organophosphate esters. The protein is Cholinesterase (BCHE) of Equus caballus (Horse).